Here is a 437-residue protein sequence, read N- to C-terminus: ATP-dependent protease ATPase subunit HslU (437 aa).

ATP is bound by residues V18, 60 to 65 (GCGKTE), D250, E315, and R387.

Belongs to the ClpX chaperone family. HslU subfamily. In terms of assembly, a double ring-shaped homohexamer of HslV is capped on each side by a ring-shaped HslU homohexamer. The assembly of the HslU/HslV complex is dependent on binding of ATP.

It localises to the cytoplasm. Functionally, ATPase subunit of a proteasome-like degradation complex; this subunit has chaperone activity. The binding of ATP and its subsequent hydrolysis by HslU are essential for unfolding of protein substrates subsequently hydrolyzed by HslV. HslU recognizes the N-terminal part of its protein substrates and unfolds these before they are guided to HslV for hydrolysis. This is ATP-dependent protease ATPase subunit HslU from Methylobacterium radiotolerans (strain ATCC 27329 / DSM 1819 / JCM 2831 / NBRC 15690 / NCIMB 10815 / 0-1).